A 404-amino-acid polypeptide reads, in one-letter code: Argininosuccinate synthase (404 aa).

Residues 12 to 20 and Ala39 contribute to the ATP site; that span reads AYSGGLDTS. Residues Tyr91 and Ser96 each coordinate L-citrulline. Gly121 contacts ATP. L-aspartate contacts are provided by Thr123, Asn127, and Asp128. Asn127 provides a ligand contact to L-citrulline. The L-citrulline site is built by Arg131, Ser180, Ser189, Glu265, and Tyr277.

Belongs to the argininosuccinate synthase family. Type 1 subfamily. In terms of assembly, homotetramer.

The protein resides in the cytoplasm. It carries out the reaction L-citrulline + L-aspartate + ATP = 2-(N(omega)-L-arginino)succinate + AMP + diphosphate + H(+). It participates in amino-acid biosynthesis; L-arginine biosynthesis; L-arginine from L-ornithine and carbamoyl phosphate: step 2/3. This chain is Argininosuccinate synthase, found in Vibrio parahaemolyticus serotype O3:K6 (strain RIMD 2210633).